The sequence spans 165 residues: Nucleotide-binding protein SYNW1816 (165 aa).

The protein belongs to the YajQ family.

Nucleotide-binding protein. The sequence is that of Nucleotide-binding protein SYNW1816 from Parasynechococcus marenigrum (strain WH8102).